Reading from the N-terminus, the 349-residue chain is MTNQHSAPLTYRDAGVDIDAGDALVDRIKPLAARTMRPGVLAGIGGFGALFEVPKKFREPVLVSGTDGVGTKLRLAFDWNRHDTVGIDLVAMSVNDILVQGAEPLYFLDYFACGKLSVDTAAAVVGGIARGCELAGCALIGGETAEMPGMYPDGEYDLAGFAVGAVDKSAIIDGKSIQPGDVVLGLASSGAHSNGYSLVRKILERAGARPDQDFHGQPLVDVVMAPTRIYVKQVLAALDRHGPAIKGLAHITGGGLLDNVPRILQPGMAAQLQRDGWEMPKLFQWLQQQGSVADAEMHRVFNCGIGMVLVVAADQADAVAATLREQGEIVNRIGEIVPQQDGMAQTVVV.

Belongs to the AIR synthase family.

It localises to the cytoplasm. The enzyme catalyses 2-formamido-N(1)-(5-O-phospho-beta-D-ribosyl)acetamidine + ATP = 5-amino-1-(5-phospho-beta-D-ribosyl)imidazole + ADP + phosphate + H(+). Its pathway is purine metabolism; IMP biosynthesis via de novo pathway; 5-amino-1-(5-phospho-D-ribosyl)imidazole from N(2)-formyl-N(1)-(5-phospho-D-ribosyl)glycinamide: step 2/2. The sequence is that of Phosphoribosylformylglycinamidine cyclo-ligase from Bordetella pertussis (strain Tohama I / ATCC BAA-589 / NCTC 13251).